A 160-amino-acid chain; its full sequence is Cytochrome c-type biogenesis protein CcmE (160 aa).

At 1–8 the chain is on the cytoplasmic side; sequence MSAPRKTR. The helical; Signal-anchor for type II membrane protein transmembrane segment at 9 to 29 threads the bilayer; it reads LYAILAVVCGAVLTIALMLYA. Residues 30 to 160 are Periplasmic-facing; the sequence is LSSNIDLFYT…PAAGPEGKRL (131 aa). 2 residues coordinate heme: H130 and Y134.

It belongs to the CcmE/CycJ family.

Its subcellular location is the cell inner membrane. Functionally, heme chaperone required for the biogenesis of c-type cytochromes. Transiently binds heme delivered by CcmC and transfers the heme to apo-cytochromes in a process facilitated by CcmF and CcmH. This Pectobacterium atrosepticum (strain SCRI 1043 / ATCC BAA-672) (Erwinia carotovora subsp. atroseptica) protein is Cytochrome c-type biogenesis protein CcmE.